Reading from the N-terminus, the 379-residue chain is tRNA-specific 2-thiouridylase MnmA (379 aa).

Residues 6 to 13 (AMSGGVDS) and Leu-32 each bind ATP. The active-site Nucleophile is the Cys-101. An intrachain disulfide couples Cys-101 to Cys-199. Gly-125 provides a ligand contact to ATP. Positions 148-150 (KDQ) are interaction with tRNA. Cys-199 (cysteine persulfide intermediate) is an active-site residue.

This sequence belongs to the MnmA/TRMU family.

The protein localises to the cytoplasm. It carries out the reaction S-sulfanyl-L-cysteinyl-[protein] + uridine(34) in tRNA + AH2 + ATP = 2-thiouridine(34) in tRNA + L-cysteinyl-[protein] + A + AMP + diphosphate + H(+). Catalyzes the 2-thiolation of uridine at the wobble position (U34) of tRNA, leading to the formation of s(2)U34. The sequence is that of tRNA-specific 2-thiouridylase MnmA from Arthrobacter sp. (strain FB24).